Reading from the N-terminus, the 317-residue chain is Phospho-N-acetylmuramoyl-pentapeptide-transferase (317 aa).

9 helical membrane-spanning segments follow: residues 4 to 24 (LIYS…ILIP), 49 to 69 (TPTM…AVIV), 76 to 96 (AMIA…DDTL), 112 to 132 (MILL…NPYI), 147 to 167 (LGVF…NAVN), 186 to 206 (FLAL…CAIL), 223 to 243 (IFMG…VAMI), 246 to 266 (LPLL…SVIF), and 297 to 317 (RVVS…FLSL).

This sequence belongs to the glycosyltransferase 4 family. MraY subfamily. Requires Mg(2+) as cofactor.

The protein localises to the cell membrane. The catalysed reaction is UDP-N-acetyl-alpha-D-muramoyl-L-alanyl-gamma-D-glutamyl-meso-2,6-diaminopimeloyl-D-alanyl-D-alanine + di-trans,octa-cis-undecaprenyl phosphate = di-trans,octa-cis-undecaprenyl diphospho-N-acetyl-alpha-D-muramoyl-L-alanyl-D-glutamyl-meso-2,6-diaminopimeloyl-D-alanyl-D-alanine + UMP. It functions in the pathway cell wall biogenesis; peptidoglycan biosynthesis. Its function is as follows. Catalyzes the initial step of the lipid cycle reactions in the biosynthesis of the cell wall peptidoglycan: transfers peptidoglycan precursor phospho-MurNAc-pentapeptide from UDP-MurNAc-pentapeptide onto the lipid carrier undecaprenyl phosphate, yielding undecaprenyl-pyrophosphoryl-MurNAc-pentapeptide, known as lipid I. The sequence is that of Phospho-N-acetylmuramoyl-pentapeptide-transferase from Clostridium kluyveri (strain NBRC 12016).